A 330-amino-acid chain; its full sequence is ADP-L-glycero-D-manno-heptose-6-epimerase (330 aa).

NADP(+) contacts are provided by residues 11–12, 32–33, K39, K54, 75–79, and N92; these read FI, DN, and EGACS. The Proton acceptor role is filled by Y139. NADP(+) is bound at residue K143. N168 contacts substrate. NADP(+) is bound by residues V169 and K177. The active-site Proton acceptor is K177. Substrate contacts are provided by residues R179, H186, 200–203, R213, and Y292; that span reads FGEY.

This sequence belongs to the NAD(P)-dependent epimerase/dehydratase family. HldD subfamily. Homopentamer. It depends on NADP(+) as a cofactor.

It carries out the reaction ADP-D-glycero-beta-D-manno-heptose = ADP-L-glycero-beta-D-manno-heptose. Its pathway is nucleotide-sugar biosynthesis; ADP-L-glycero-beta-D-manno-heptose biosynthesis; ADP-L-glycero-beta-D-manno-heptose from D-glycero-beta-D-manno-heptose 7-phosphate: step 4/4. Its function is as follows. Catalyzes the interconversion between ADP-D-glycero-beta-D-manno-heptose and ADP-L-glycero-beta-D-manno-heptose via an epimerization at carbon 6 of the heptose. The sequence is that of ADP-L-glycero-D-manno-heptose-6-epimerase from Burkholderia pseudomallei (strain K96243).